The primary structure comprises 2472 residues: MPPNIKWKELIKVDPDDLPRQEELADKLLISLSKVEVNELKNEDQENMIHLFRITQSLMKMKAQEVELALEEVEKAGEEQAKFENQLKTKVMKLENELEMAQQSAGGRDTRFLRDEIRQLEKQLEQKDRELEDMEKELDKEKKVNEQLALRNEEAENENSKLRRENEQLRQDIIDYQKQIDSQKESLLSRRGEDSDYRSQLSKKNYELVQYLDEIQTLTEANEKIEVQNQEMRKNLEESVQEMEKMTDEYNRMKALVHQSDAVMDQIKKENEHYRLQVRELTDLLKAKDEEDDPVMMAVNAKVEEWKLILSSKDDEIIEYQQMLQSLRGKLKNAQLDADKSNIMALKQGIQERDSQIKMLTEQVEQYTKEMEKNTFIIEDLKNELQKDKGTSNFYQQTHYMKIHSKVQILEEKTKEAERIAELAEADAREKDKELVEALKRLKDYESGVYGLEDAVIEIKNCKAQIKIRDGEMEVLTKEINKLEMKINDILDENEALRERAGLEPKTMIDLTEFRNSKRLKQQQYRAENQVLLKEIESLEEERLDLKRKIRQMAQERGKRNAASGLTIDDLNLSETFSHENKIEGRKLNFMSLNNMNETQSKNEFLSRELAEKEKDLERSRTVIAKFQSKLKELVEENKQLEEGMKEILQAIKDMPKDSDVKGGETSLIIPSLERLVNAMESKNAEGIFDASLHLKAQVDQLTGRNEELRQELRQSRKEAVNYSQQLVKANLKIDHLEKETDLLRQSAGSNVVYKGIDLPDGIAPSSAYIINSQNEYLIHLLQELDNKEKKLKHLEDSLEDYNRKFAVIRHQQSLLYKEYLSEKDIWKTDSEMIREEKRKLEDQAEQDAVKVKEYNNLLSALQMDSNEMKKMLSENSRKITVLQVNEKSLIRQYTTLVEMERHLRKENGKHRNDVIAMEAEVTEKLGSLQRFKEMAIFKIAALQKVIDNSVSLSELELANKQYNELTTKYRDILQKDNMLVQRTSNLEHLECENASLKEQMEAISKELEITKEKLHTIEQAWEQETKLGNDSNMDKAKKSMTNSDIVSISKKITVLEMKELNERQRAEHCQKMYEHLRTSLKQMEERNFELETKFTELTKINLDAQKVEQMLRDELADSVTKAVSDADRQRILELEKSEVELKVEVSKLREISDIAKRQVDFLNSQQQSREKEVESLRTQLLDFQAQSDEKALIAKLHQHVVSLQISEATALGKLESVTSKLQKMEAYNLRLEQKLDEKEQALYYARLEGRNRAKHLRQTIQSLRRQFSGALPLAQQEKFSKTMIQLQNDKLKIMQEMKNSQQEHRNMENKTLELELKLKGLEELISTLKDARGAQKVINWHVKIEELRLQELKLNRELVKGKEEIKYLNNIISEYEHTINSLEEEIVQQSKFHEERQMAWDQREVELERQLDIFDHQQNEILSAAQKFEDSTGSMPDPSLPLPNQLEIALRKIKENIQVILKTQATCKSLEEKLKEKESALRLAEQNILSRDKVINELRLRLPATADREKLIAELERKELEPKSHHTMKIAHQTIANMQARLNHKEEVLKKYQHLLEKAREEQREIVKKHEEDLHVLHHKLEQQADNSLNKFRQTAQDLLKQSPAPVPTNKHFIRLAEMEQTVAEQDDSLSSLLTKLKKVSKDLEKQKEITELKVREFENTKLRLQETHASEVKKVKAEVEDLRHALAQAHKDSQSLKSELQAQKEANSRAPTTTMRNLVDRLKSQLALKEKQQKALSRALLELRSEMTAAAEERIIAVTSQKEANLNVQQVVERHTRELKSQIEDLNENLLKLKEALKTSKNKENSLADDLNELNNELQKKQKAYNKILREKDGIDQENDELRRQIKRLSSGLQSKTLIDNKQSLIDELQKKVKKLESQLERKVDDVDIKPVKEKSSKEELIRWEEGKKWQTKVEGLRNRLKEKEGEAHGLAKQLNTLKELFAKADKEKLTLQKKLKTTGMTVDQVLGVRALESEKELEELKKKNLDLENDILYMRTQQALPRDSVVEDLHLQNKYLQEKLHTLEKKLSKEKYSQSLTSEIESDDHCQKEQELQKENLKLSSENIELKFQLEQANKDLPRLKNQVKDLKEMCEFLKKGKLELERKLGQVRGAGRSGKTIPELEKTIGLMKKVVEKVQRENEQLKKASGILTSEKMATIEEENRNLKAELEKLKAHFGRQLSMQFESKNKGTEKIVAENERLRKELKKEIEASEKLRIAKNNLELVNDKMAAQLEETGKRLQFAESRAPQLEGADSKSWKSIVVSRVYETKMKELESDIAKKNQSITDLKQLVREATEREQKAKKYTEDLEQQIEILKNVPEGAETEQELIRELQLLRLANNQMDKERAELIHQIEINKDQTRADSSIPDSDQLKEKINDLETQLRKLELEKQHSKEEVKKLKKELENFDPSFFEEIEDLKYNYKEEVKKNILLEEKLKKLSEQFGFELPSPLAASEHSEDGESPHSFPIY.

Positions 1–689 (MPPNIKWKEL…MESKNAEGIF (689 aa)) are self-association (with itself or C-terminus). Coiled coils occupy residues 59 to 747 (MKMK…LRQS), 1129 to 1392 (RQRI…QQSK), and 1459 to 1492 (QVIL…ILSR). The interval 128–164 (DRELEDMEKELDKEKKVNEQLALRNEEAENENSKLRR) is disordered. Positions 137 to 164 (ELDKEKKVNEQLALRNEEAENENSKLRR) are enriched in basic and acidic residues. An interaction with IQCB1 region spans residues 690–890 (DASLHLKAQV…TVLQVNEKSL (201 aa)). Disordered regions lie at residues 1691–1713 (AHKD…SRAP) and 2451–2472 (PSPL…FPIY). Polar residues predominate over residues 1697-1713 (SLKSELQAQKEANSRAP). The interval 1960–2472 (TTGMTVDQVL…GESPHSFPIY (513 aa)) is self-association (with itself or N-terminus).

As to quaternary structure, part of the tectonic-like complex (also named B9 complex). Interacts with ATF4 via its N-terminal region. Associates with the BBSome complex, interacting (via N-terminus) with BBS4. Interacts with IQCB1/NPHP5; IQCB1 and CEP290/NPHP6 are proposed to form a functional NPHP5-6 module localized to the centrosome. Interacts with NPHP4; the interaction likely requires additional interactors. Interacts with ZNF423, FAM161A, CEP162, CEP162, CEP131, TALPID3, CCDC13, CC2D2A, RPGRIP1. Can self-associate (homo- or heteromeric). Interacts with CCP110; required for suppressing cilia formation. Interacts with RPGR. Associates (via C-terminus) with microtubules; association to microtubule is reduced in response to cellular stress, such as ultraviolet light (UV) radiation or heat shock, in a process that requires p38 MAP kinase signaling. Interacts with FAM161A. Interacts with PCM1. Interacts with CCDC66. Interacts with ARMC9 and CSPP1. Ubiquitinated. May undergo monoubiquitination; monoubiquitination is inhibited in response to cellular stress, such as ultraviolet light (UV) radiation or heat shock, but does not cause its displacement from centriolar satellites. Expressed in multiple organs during early postnatal development, with highest levels in hindbrain.

The protein localises to the cytoplasm. Its subcellular location is the cytoskeleton. It localises to the microtubule organizing center. It is found in the centrosome. The protein resides in the centriolar satellite. The protein localises to the nucleus. Its subcellular location is the centriole. It localises to the cell projection. It is found in the cilium. The protein resides in the cilium basal body. The protein localises to the cytoplasmic vesicle. In terms of biological role, involved in early and late steps in cilia formation. Its association with CCP110 is required for inhibition of primary cilia formation by CCP110. May play a role in early ciliogenesis in the disappearance of centriolar satellites and in the transition of primary ciliar vesicles (PCVs) to capped ciliary vesicles (CCVs). Required for the centrosomal recruitment of RAB8A and for the targeting of centriole satellite proteins to centrosomes such as of PCM1. Required for the correct localization of ciliary and phototransduction proteins in retinal photoreceptor cells; may play a role in ciliary transport processes. Required for efficient recruitment of RAB8A to primary cilium. In the ciliary transition zone is part of the tectonic-like complex (also named B9 complex) which is required for tissue-specific ciliogenesis and may regulate ciliary membrane composition. Involved in regulation of the BBSome complex integrity, specifically for presence of BBS2, BBS5 and BBS8/TTC8 in the complex, and in ciliary targeting of selected BBSome cargos. May play a role in controlling entry of the BBSome complex to cilia possibly implicating IQCB1/NPHP5. Activates ATF4-mediated transcription. This is Centrosomal protein of 290 kDa from Mus musculus (Mouse).